A 549-amino-acid polypeptide reads, in one-letter code: Solute carrier family 22 member 6 (549 aa).

Topologically, residues 1 to 23 are cytoplasmic; that stretch reads MAFNDLLLQLGGVGRFQKIQVTL. The helical transmembrane segment at 24–44 threads the bilayer; sequence VILPLILLASHNTLQNFTAAI. Over 45 to 135 the chain is Extracellular; it reads PTHHCRPPAD…LVCSHRALRQ (91 aa). 3 N-linked (GlcNAc...) asparagine glycosylation sites follow: Asn56, Asn92, and Asn113. A helical membrane pass occupies residues 136-156; it reads LAQSLYMMGVLLGAMTFGCLA. The Cytoplasmic portion of the chain corresponds to 157-164; the sequence is DRLGRRKV. Residues 165-185 form a helical membrane-spanning segment; the sequence is LIFNYLQTAVSGTCAAFAPNF. The Extracellular portion of the chain corresponds to 186–195; sequence PAYCAFRFLS. A helical transmembrane segment spans residues 196–216; that stretch reads GMSTAGVVLNCMTLNVEWMPI. The Cytoplasmic portion of the chain corresponds to 217-224; sequence HTRAYVGT. The helical transmembrane segment at 225-245 threads the bilayer; it reads LTGYVYSLGQFLLAGMAYAVP. Topologically, residues 246–248 are extracellular; that stretch reads HWR. The helical transmembrane segment at 249–269 threads the bilayer; it reads YLQLLVSAPFFAFFIYSWFFI. Topologically, residues 270–337 are cytoplasmic; it reads ESARWYASSG…ELIRCPALRR (68 aa). Residues 338–358 form a helical membrane-spanning segment; the sequence is LFLCLSMLWFATSFAYYGLVM. Topologically, residues 359-368 are extracellular; that stretch reads DLQGFGVSIY. Residues 369–389 form a helical membrane-spanning segment; the sequence is LIQVIFGAVDLPAKLVSFLVI. At 390 to 395 the chain is on the cytoplasmic side; that stretch reads NNVGRR. A helical transmembrane segment spans residues 396–416; it reads PAQMASLLLAGICILINGVVP. Over 417-425 the chain is Extracellular; it reads KDKSIVRTS. Residues 426 to 446 traverse the membrane as a helical segment; the sequence is LAVLGKGCLASSFNCIFLYTG. Topologically, residues 447-456 are cytoplasmic; sequence EVYPTMIRQT. Residues 457 to 477 form a helical membrane-spanning segment; it reads GLGMGSTLARVGSIVSPLVSM. The Extracellular portion of the chain corresponds to 478 to 484; the sequence is TAELYPS. Residues 485–505 traverse the membrane as a helical segment; that stretch reads VPLFIYGAVPVAASAAIALLP. The Cytoplasmic portion of the chain corresponds to 506–549; that stretch reads ETLGQPLPDTVQDVENRRRGKTRKQQEELQKQMVPLQASAQVKN. Residues 521-549 are disordered; that stretch reads NRRRGKTRKQQEELQKQMVPLQASAQVKN.

The protein belongs to the major facilitator (TC 2.A.1) superfamily. Organic cation transporter (TC 2.A.1.19) family. Glycosylated. Glycosylation is necessary for proper targeting of the transporter to the plasma membrane.

Its subcellular location is the basolateral cell membrane. The protein resides in the basal cell membrane. The catalysed reaction is (6R)-L-erythro-5,6,7,8-tetrahydrobiopterin(out) + a dicarboxylate(in) = (6R)-L-erythro-5,6,7,8-tetrahydrobiopterin(in) + a dicarboxylate(out). It catalyses the reaction L-erythro-7,8-dihydrobiopterin(out) + a dicarboxylate(in) = L-erythro-7,8-dihydrobiopterin(in) + a dicarboxylate(out). It carries out the reaction L-sepiapterin(out) + a dicarboxylate(in) = L-sepiapterin(in) + a dicarboxylate(out). The enzyme catalyses prostaglandin F2alpha(out) + a dicarboxylate(in) = prostaglandin F2alpha(in) + a dicarboxylate(out). The catalysed reaction is prostaglandin E2(out) + a dicarboxylate(in) = prostaglandin E2(in) + a dicarboxylate(out). It catalyses the reaction 3',5'-cyclic AMP(out) + a dicarboxylate(in) = 3',5'-cyclic AMP(in) + a dicarboxylate(out). It carries out the reaction 3',5'-cyclic GMP(out) + a dicarboxylate(in) = 3',5'-cyclic GMP(in) + a dicarboxylate(out). The enzyme catalyses urate(out) + a dicarboxylate(in) = urate(in) + a dicarboxylate(out). The catalysed reaction is kynurenate(out) + glutarate(in) = kynurenate(in) + glutarate(out). It catalyses the reaction (indol-3-yl)acetate(out) + a dicarboxylate(in) = (indol-3-yl)acetate(in) + a dicarboxylate(out). It carries out the reaction indoxyl sulfate(out) + a dicarboxylate(in) = indoxyl sulfate(in) + a dicarboxylate(out). The enzyme catalyses N-benzoylglycine(out) + a dicarboxylate(in) = N-benzoylglycine(in) + a dicarboxylate(out). The catalysed reaction is 3-carboxy-4-methyl-5-propyl-2-furanpropanoate(out) + a dicarboxylate(in) = 3-carboxy-4-methyl-5-propyl-2-furanpropanoate(in) + a dicarboxylate(out). Secondary active transporter that functions as a Na(+)-independent organic anion (OA)/dicarboxylate antiporter where the uptake of one molecule of OA into the cell is coupled with an efflux of one molecule of intracellular dicarboxylate such as 2-oxoglutarate or glutarate. Mediates the uptake of OA across the basolateral side of proximal tubule epithelial cells, thereby contributing to the renal elimination of endogenous OA from the systemic circulation into the urine. Functions as a biopterin transporters involved in the uptake and the secretion of coenzymes tetrahydrobiopterin (BH4), dihydrobiopterin (BH2) and sepiapterin to urine, thereby determining baseline levels of blood biopterins. Transports prostaglandin E2 (PGE2) and prostaglandin F2-alpha (PGF2-alpha) and may contribute to their renal excretion. Also mediates the uptake of cyclic nucleotides such as cAMP and cGMP. Involved in the transport of neuroactive tryptophan metabolites kynurenate (KYNA) and xanthurenate (XA) and may contribute to their secretion from the brain. May transport glutamate. Also involved in the disposition of uremic toxins and potentially toxic xenobiotics by the renal organic anion secretory pathway, helping reduce their undesired toxicological effects on the body. Uremic toxins include the indoxyl sulfate (IS), hippurate/N-benzoylglycine (HA), indole acetate (IA), 3-carboxy-4- methyl-5-propyl-2-furanpropionate (CMPF) and urate. Xenobiotics include the mycotoxin ochratoxin (OTA). May also contribute to the transport of organic compounds in testes across the blood-testis-barrier. The polypeptide is Solute carrier family 22 member 6 (Bos taurus (Bovine)).